The following is a 130-amino-acid chain: Glycoprotein hormone alpha-2 (130 aa).

The first 22 residues, Met1–Gly22, serve as a signal peptide directing secretion. 4 disulfide bridges follow: Cys32–Cys90, Cys49–Cys104, Cys58–Cys120, and Cys62–Cys122. Asn38 and Asn82 each carry an N-linked (GlcNAc...) asparagine glycan.

This sequence belongs to the glycoprotein hormones subunit alpha family. In terms of assembly, heterodimer with GPHB5; this heterodimer interacts with thyroid-stimulating hormone receptor (TSHR), and hence stimulates cAMP production.

It localises to the secreted. Its function is as follows. Functions as a heterodimeric glycoprotein hormone with GPHB5 able to bind and activate the thyroid-stimulating hormone receptor (TSHR), leading to increased cAMP production. Plays a central role in controlling thyroid cell metabolism. This Rattus norvegicus (Rat) protein is Glycoprotein hormone alpha-2 (Gpha2).